The following is a 246-amino-acid chain: AA9 family lytic polysaccharide monooxygenase D (246 aa).

The first 19 residues, 1–19 (MHLLSLLFPVIALIPTVLS), serve as a signal peptide directing secretion. Histidine 20 serves as a coordination point for Cu(2+). An intrachain disulfide couples cysteine 78 to cysteine 196. 3 N-linked (GlcNAc...) asparagine glycosylation sites follow: asparagine 86, asparagine 141, and asparagine 156. Residues histidine 182 and glutamine 191 each contribute to the O2 site. Position 193 (tyrosine 193) interacts with Cu(2+). N-linked (GlcNAc...) asparagine glycosylation is present at asparagine 235.

It belongs to the polysaccharide monooxygenase AA9 family. The cofactor is Cu(2+).

The protein resides in the secreted. It carries out the reaction [(1-&gt;4)-beta-D-glucosyl]n+m + reduced acceptor + O2 = 4-dehydro-beta-D-glucosyl-[(1-&gt;4)-beta-D-glucosyl]n-1 + [(1-&gt;4)-beta-D-glucosyl]m + acceptor + H2O.. In terms of biological role, lytic polysaccharide monooxygenase (LPMO) that depolymerizes crystalline and amorphous polysaccharides via the oxidation of scissile alpha- or beta-(1-4)-glycosidic bonds, yielding C1 and C4 oxidation products. Catalysis by LPMOs requires the reduction of the active-site copper from Cu(II) to Cu(I) by a reducing agent and H(2)O(2) or O(2) as a cosubstrate. The sequence is that of AA9 family lytic polysaccharide monooxygenase D from Botryotinia fuckeliana (strain B05.10) (Noble rot fungus).